The primary structure comprises 489 residues: Mitochondrial distribution and morphology protein 34 (489 aa).

The region spanning 1-205 (MSFNINWDSI…LPSVLYKFSQ (205 aa)) is the SMP-LTD domain.

The protein belongs to the MDM34 family. In terms of assembly, component of the ER-mitochondria encounter structure (ERMES) or MDM complex, composed of MMM1, MDM10, MDM12 and MDM34.

It is found in the mitochondrion outer membrane. In terms of biological role, component of the ERMES/MDM complex, which serves as a molecular tether to connect the endoplasmic reticulum (ER) and mitochondria. Components of this complex are involved in the control of mitochondrial shape and protein biogenesis, and function in nonvesicular lipid trafficking between the ER and mitochondria. MDM34 is required for the interaction of the ER-resident membrane protein MMM1 and the outer mitochondrial membrane-resident beta-barrel protein MDM10. In Komagataella phaffii (strain GS115 / ATCC 20864) (Yeast), this protein is Mitochondrial distribution and morphology protein 34.